The following is a 202-amino-acid chain: Small ribosomal subunit protein uS2 (202 aa).

Belongs to the universal ribosomal protein uS2 family.

The sequence is that of Small ribosomal subunit protein uS2 (rps2) from Pyrococcus abyssi (strain GE5 / Orsay).